We begin with the raw amino-acid sequence, 378 residues long: Probable 3-hydroxyisobutyryl-CoA hydrolase 2 (378 aa).

The substrate site is built by glycine 115, glutamate 138, and aspartate 146. The short motif at alanine 376–leucine 378 is the Microbody targeting signal element.

Belongs to the enoyl-CoA hydratase/isomerase family.

The protein localises to the peroxisome. It catalyses the reaction 3-hydroxy-2-methylpropanoyl-CoA + H2O = 3-hydroxy-2-methylpropanoate + CoA + H(+). The protein operates within amino-acid degradation; L-valine degradation. In terms of biological role, involved in valine catabolism. The polypeptide is Probable 3-hydroxyisobutyryl-CoA hydrolase 2 (Arabidopsis thaliana (Mouse-ear cress)).